The following is a 93-amino-acid chain: MARVTVQEAADKIGNRFDLILTAARRARQLQLHAREPLVPEENDKPTVIALREIEKGLINGQIMDQLENNDAIQQEVAEQEAISFLADVQANA.

The protein belongs to the RNA polymerase subunit omega family. In terms of assembly, the RNAP catalytic core consists of 2 alpha, 1 beta, 1 beta' and 1 omega subunit. When a sigma factor is associated with the core the holoenzyme is formed, which can initiate transcription.

It carries out the reaction RNA(n) + a ribonucleoside 5'-triphosphate = RNA(n+1) + diphosphate. In terms of biological role, promotes RNA polymerase assembly. Latches the N- and C-terminal regions of the beta' subunit thereby facilitating its interaction with the beta and alpha subunits. The protein is DNA-directed RNA polymerase subunit omega of Actinobacillus pleuropneumoniae serotype 7 (strain AP76).